The sequence spans 134 residues: Ribonuclease VapC1 (134 aa).

The region spanning 3–132 (YMLDTNIIIY…RITDLQWQDW (130 aa)) is the PINc domain. Residues Asp-6 and Asp-99 each coordinate Mg(2+).

It belongs to the PINc/VapC protein family. The cofactor is Mg(2+).

In terms of biological role, toxic component of a type II toxin-antitoxin (TA) system. Acts as an RNase, its toxic effect is neutralized by VapB1 antitoxin. The polypeptide is Ribonuclease VapC1 (Haemophilus influenzae (strain ATCC 51907 / DSM 11121 / KW20 / Rd)).